The sequence spans 149 residues: D-aminoacyl-tRNA deacylase (149 aa).

The short motif at glycine 137 to proline 138 is the Gly-cisPro motif, important for rejection of L-amino acids element.

It belongs to the DTD family. In terms of assembly, homodimer.

It is found in the cytoplasm. It catalyses the reaction glycyl-tRNA(Ala) + H2O = tRNA(Ala) + glycine + H(+). The catalysed reaction is a D-aminoacyl-tRNA + H2O = a tRNA + a D-alpha-amino acid + H(+). An aminoacyl-tRNA editing enzyme that deacylates mischarged D-aminoacyl-tRNAs. Also deacylates mischarged glycyl-tRNA(Ala), protecting cells against glycine mischarging by AlaRS. Acts via tRNA-based rather than protein-based catalysis; rejects L-amino acids rather than detecting D-amino acids in the active site. By recycling D-aminoacyl-tRNA to D-amino acids and free tRNA molecules, this enzyme counteracts the toxicity associated with the formation of D-aminoacyl-tRNA entities in vivo and helps enforce protein L-homochirality. The chain is D-aminoacyl-tRNA deacylase from Desulforamulus reducens (strain ATCC BAA-1160 / DSM 100696 / MI-1) (Desulfotomaculum reducens).